The following is a 496-amino-acid chain: Glycylpeptide N-tetradecanoyltransferase 1 (496 aa).

The tract at residues methionine 1–asparagine 82 is disordered. Serine 31 and serine 47 each carry phosphoserine. Over residues lysine 55–glutamate 66 the composition is skewed to basic residues. Serine 83 carries the phosphoserine modification. Glutamine 118, phenylalanine 119, tryptophan 120, phenylalanine 247, leucine 248, cysteine 249, valine 250, serine 256, arginine 258, valine 259, and alanine 260 together coordinate tetradecanoyl-CoA.

It belongs to the NMT family. Heart, gut, kidney, liver and placenta.

It is found in the cytoplasm. Its subcellular location is the cytosol. The protein localises to the membrane. The catalysed reaction is N-terminal glycyl-[protein] + tetradecanoyl-CoA = N-tetradecanoylglycyl-[protein] + CoA + H(+). The enzyme catalyses N-terminal glycyl-L-lysyl-[protein] + tetradecanoyl-CoA = N-terminal glycyl-(N(6)-tetradecanoyl)-L-lysyl-[protein] + CoA + H(+). Functionally, adds a myristoyl group to the N-terminal glycine residue of certain cellular and viral proteins. Also able to mediate N-terminal lysine myristoylation of proteins: catalyzes myristoylation of ARF6 on both 'Gly-2' and 'Lys-3'. Lysine myristoylation is required to maintain ARF6 on membranes during the GTPase cycle. The chain is Glycylpeptide N-tetradecanoyltransferase 1 from Homo sapiens (Human).